A 502-amino-acid chain; its full sequence is Interleukin-17 receptor B (502 aa).

Residues 1–17 (MSLVLLSLAALCRSAVP) form the signal peptide. Residues 18–292 (REPTVQCGSE…NKSKPGGWLP (275 aa)) lie on the Extracellular side of the membrane. 6 N-linked (GlcNAc...) asparagine glycosylation sites follow: Asn67, Asn103, Asn156, Asn183, Asn197, and Asn283. Residues 293–313 (LLLLSLLVATWVLVAGIYLMW) form a helical membrane-spanning segment. Residues 314–502 (RHERIKKTSF…QACHDGCCSL (189 aa)) are Cytoplasmic-facing. The SEFIR domain occupies 331 to 477 (PIKVLVVYPS…LMKDATAFCA (147 aa)).

As to quaternary structure, interacts with DAZAP2. Interacts with TRAF3IP2. In terms of tissue distribution, expressed in several endocrine tissues, mostly in fetal and adult liver, kidney, pancreas, testis, colon, brain and small intestine; not detected in peripheral blood leukocytes, lymphoid organs, and most cell lines.

Its subcellular location is the cell membrane. It localises to the secreted. Functionally, receptor for the pro-inflammatory cytokines IL17B and IL17E. May play a role in controlling the growth and/or differentiation of hematopoietic cells. The polypeptide is Interleukin-17 receptor B (IL17RB) (Homo sapiens (Human)).